The chain runs to 176 residues: B9 domain-containing protein 2 (176 aa).

One can recognise a C2 B9-type domain in the interval 2–118; that stretch reads AEVHIIGQII…LSPTWRPLGT (117 aa).

Belongs to the B9D family. As to quaternary structure, part of the tectonic-like complex (also named B9 complex).

It is found in the cytoplasm. The protein localises to the cytoskeleton. Its subcellular location is the cilium basal body. The protein resides in the cilium axoneme. In terms of biological role, component of the tectonic-like complex, a complex localized at the transition zone of primary cilia and acting as a barrier that prevents diffusion of transmembrane proteins between the cilia and plasma membranes. In Xenopus laevis (African clawed frog), this protein is B9 domain-containing protein 2 (b9d2).